The chain runs to 400 residues: Probable peptidoglycan D,D-transpeptidase PenA (400 aa).

Positions 1-21 (NIDGKGQEGLELSREDSLRGE) are disordered. The active-site Acyl-ester intermediate is serine 128.

It belongs to the transpeptidase family. FtsI subfamily.

The protein resides in the cell inner membrane. The enzyme catalyses Preferential cleavage: (Ac)2-L-Lys-D-Ala-|-D-Ala. Also transpeptidation of peptidyl-alanyl moieties that are N-acyl substituents of D-alanine.. Its pathway is cell wall biogenesis; peptidoglycan biosynthesis. In terms of biological role, catalyzes cross-linking of the peptidoglycan cell wall at the division septum. The polypeptide is Probable peptidoglycan D,D-transpeptidase PenA (Neisseria flavescens).